The following is a 201-amino-acid chain: Receptor expression-enhancing protein 1 (201 aa).

2 consecutive transmembrane segments (helical) span residues 1-21 (MVSWIISRLVVLIFGTLYPAY) and 35-55 (YVKWMMYWIIFALFTTAETFT). At Ser152 the chain carries Phosphoserine. The tract at residues 158–201 (TIRGDGAPAPSGPPPPGTGRSSGKHSQPKMSRSASESAGSSGTA) is disordered. Over residues 188 to 201 (SRSASESAGSSGTA) the composition is skewed to low complexity.

Belongs to the DP1 family. In terms of assembly, interacts with OLFR992. Interacts with SPAST and ATL1. Interacts (via C-terminus) with microtubules. Interacts with ZFYVE27. As to expression, detected in olfactory sensory neurons of the olfactory epithelium, and in total brain.

Its subcellular location is the membrane. The protein localises to the mitochondrion membrane. The protein resides in the endoplasmic reticulum. Its function is as follows. Required for endoplasmic reticulum (ER) network formation, shaping and remodeling; it links ER tubules to the cytoskeleton. May also enhance the cell surface expression of odorant receptors. This is Receptor expression-enhancing protein 1 (Reep1) from Mus musculus (Mouse).